An 808-amino-acid chain; its full sequence is Protein NLP5 (808 aa).

Polar residues predominate over residues 56–68 (PTQDTSNSLSQMY). Residues 56–83 (PTQDTSNSLSQMYGQDCPERSSLEDQNQ) are disordered. The RWP-RK domain maps to 536–617 (NRVTEKKRTK…IDSVEGVSGH (82 aa)). The disordered stretch occupies residues 660–680 (SPGSSCSHSSSCSSETQVIKE). A compositionally biased stretch (low complexity) spans 663–673 (SSCSHSSSCSS). In terms of domain architecture, PB1 spans 710–793 (FLRVKVSYEE…QTIKLLLQLS (84 aa)).

The protein localises to the nucleus. Probable transcription factor. This Arabidopsis thaliana (Mouse-ear cress) protein is Protein NLP5 (NLP5).